The chain runs to 159 residues: MKNHLLFWGVLAVFIKAVHVKAQEDERIVLVDNKCKCARITSRIIRSSEDPNEDIVERNIRIIVPLNNRENISDPTSPLRTRFVYHLSDLCKKCDPTEVELDNQIVTATQSNICDEDSATETCYTYDRNKCYTAVVPLVYGGETKMVETALTPDACYPD.

The N-terminal stretch at 1 to 22 (MKNHLLFWGVLAVFIKAVHVKA) is a signal peptide. Glutamine 23 is subject to Pyrrolidone carboxylic acid. 3 disulfides stabilise this stretch: cysteine 35-cysteine 123, cysteine 94-cysteine 114, and cysteine 131-cysteine 156. An N-linked (GlcNAc...) (complex) asparagine glycan is attached at asparagine 71.

Part of the secretory IgA (sIgA) complex that consists of two, four or five IgA monomers, and two additional non-Ig polypeptides, namely the JCHAIN and the secretory component (the proteolytic product of PIGR). Part of the secretory IgM (sIgM) complex that consists of five IgM monomers, and two additional non-Ig polypeptides, namely the JCHAIN and the secretory component (the proteolytic product of PIGR). JCHAIN-containing IgM interacts (via CH4 domain) with FCRM (via Ig-like domain).

Its subcellular location is the secreted. Functionally, serves to link two monomer units of either IgM or IgA. In the case of IgM, the J chain-joined dimer is a nucleating unit for the IgM pentamer, and in the case of IgA it induces dimers and/or larger polymers. It also helps to bind these immunoglobulins to secretory component. The chain is Immunoglobulin J chain from Homo sapiens (Human).